Consider the following 123-residue polypeptide: Small ribosomal subunit protein eS8 (123 aa).

Positions 1 to 37 (MKDQGRSTRKRTGGRLKHASNKKRHQLGREPAETTVG) are disordered. The segment covering 7–26 (STRKRTGGRLKHASNKKRHQ) has biased composition (basic residues).

It belongs to the eukaryotic ribosomal protein eS8 family. Part of the 30S ribosomal subunit.

This Halorubrum lacusprofundi (strain ATCC 49239 / DSM 5036 / JCM 8891 / ACAM 34) protein is Small ribosomal subunit protein eS8.